The sequence spans 166 residues: Phosphopantetheine adenylyltransferase (166 aa).

Residue serine 9 participates in substrate binding. ATP-binding positions include 9–10 (SY) and histidine 17. Residues lysine 41, isoleucine 75, and lysine 89 each contribute to the substrate site. ATP-binding positions include 90 to 92 (GLR), glutamate 100, and 124 to 130 (LEHISSS).

It belongs to the bacterial CoaD family. In terms of assembly, homohexamer. Requires Mg(2+) as cofactor.

Its subcellular location is the cytoplasm. It carries out the reaction (R)-4'-phosphopantetheine + ATP + H(+) = 3'-dephospho-CoA + diphosphate. The protein operates within cofactor biosynthesis; coenzyme A biosynthesis; CoA from (R)-pantothenate: step 4/5. Its function is as follows. Reversibly transfers an adenylyl group from ATP to 4'-phosphopantetheine, yielding dephospho-CoA (dPCoA) and pyrophosphate. The sequence is that of Phosphopantetheine adenylyltransferase from Bifidobacterium longum (strain DJO10A).